Reading from the N-terminus, the 103-residue chain is Histone H4 (103 aa).

Residues 1-14 (MSGRGKGGKGLGKG) show a composition bias toward gly residues. Positions 1–20 (MSGRGKGGKGLGKGGAKRHR) are disordered. Residues 17–21 (KRHRK) mediate DNA binding.

Belongs to the histone H4 family. As to quaternary structure, the nucleosome is a histone octamer containing two molecules each of H2A, H2B, H3 and H4 assembled in one H3-H4 heterotetramer and two H2A-H2B heterodimers. The octamer wraps approximately 147 bp of DNA.

It localises to the nucleus. The protein resides in the chromosome. Core component of nucleosome. Nucleosomes wrap and compact DNA into chromatin, limiting DNA accessibility to the cellular machineries which require DNA as a template. Histones thereby play a central role in transcription regulation, DNA repair, DNA replication and chromosomal stability. DNA accessibility is regulated via a complex set of post-translational modifications of histones, also called histone code, and nucleosome remodeling. This is Histone H4 from Eimeria tenella (Coccidian parasite).